The chain runs to 73 residues: Antimicrobial peptide 6 (73 aa).

Positions 1–22 (MQIKHLITLFFLVLIVADQCSA) are cleaved as a signal peptide. Positions 45–73 (EISTQIDQYRNLQKREAELEELLDRLPMY) are excised as a propeptide.

This sequence belongs to the non-disulfide-bridged peptide (NDBP) superfamily. Short antimicrobial peptide (group 4) family. As to expression, expressed by the venom gland.

Its subcellular location is the secreted. Antibacterial peptide. The sequence is that of Antimicrobial peptide 6 from Tityus costatus (Brazilian scorpion).